Reading from the N-terminus, the 139-residue chain is Nucleoside diphosphate kinase (139 aa).

ATP contacts are provided by Lys10, Phe58, Arg86, Thr92, Arg104, and Asn114. The active-site Pros-phosphohistidine intermediate is His117.

This sequence belongs to the NDK family. In terms of assembly, homotetramer. Mg(2+) serves as cofactor.

The protein resides in the cytoplasm. The catalysed reaction is a 2'-deoxyribonucleoside 5'-diphosphate + ATP = a 2'-deoxyribonucleoside 5'-triphosphate + ADP. It catalyses the reaction a ribonucleoside 5'-diphosphate + ATP = a ribonucleoside 5'-triphosphate + ADP. Functionally, major role in the synthesis of nucleoside triphosphates other than ATP. The ATP gamma phosphate is transferred to the NDP beta phosphate via a ping-pong mechanism, using a phosphorylated active-site intermediate. The chain is Nucleoside diphosphate kinase from Rhodococcus opacus (strain B4).